A 299-amino-acid chain; its full sequence is Acetaldehyde dehydrogenase 1 (299 aa).

Cysteine 130 serves as the catalytic Acyl-thioester intermediate. NAD(+) contacts are provided by residues 161-169 (SVGPGTRKN) and asparagine 272.

The protein belongs to the acetaldehyde dehydrogenase family.

It carries out the reaction acetaldehyde + NAD(+) + CoA = acetyl-CoA + NADH + H(+). The chain is Acetaldehyde dehydrogenase 1 (mhpF) from Burkholderia cenocepacia (strain ATCC BAA-245 / DSM 16553 / LMG 16656 / NCTC 13227 / J2315 / CF5610) (Burkholderia cepacia (strain J2315)).